The following is a 40-amino-acid chain: Photosystem II reaction center protein J (40 aa).

The chain crosses the membrane as a helical span at residues 8–28 (IPLWLIGTVTGIIVIGLLGVF).

The protein belongs to the PsbJ family. PSII is composed of 1 copy each of membrane proteins PsbA, PsbB, PsbC, PsbD, PsbE, PsbF, PsbH, PsbI, PsbJ, PsbK, PsbL, PsbM, PsbT, PsbX, PsbY, PsbZ, Psb30/Ycf12, at least 3 peripheral proteins of the oxygen-evolving complex and a large number of cofactors. It forms dimeric complexes.

Its subcellular location is the plastid. It is found in the chloroplast thylakoid membrane. One of the components of the core complex of photosystem II (PSII). PSII is a light-driven water:plastoquinone oxidoreductase that uses light energy to abstract electrons from H(2)O, generating O(2) and a proton gradient subsequently used for ATP formation. It consists of a core antenna complex that captures photons, and an electron transfer chain that converts photonic excitation into a charge separation. In Pinus thunbergii (Japanese black pine), this protein is Photosystem II reaction center protein J.